The sequence spans 52 residues: Protein PROPEP890 (52 aa).

Positions 27–52 are disordered; the sequence is PQADLPQTPNSQVRIVSRDLPRGGNY. Residues 31-40 are compositionally biased toward polar residues; that stretch reads LPQTPNSQVR. Residues 42–52 are compositionally biased toward basic and acidic residues; sequence VSRDLPRGGNY.

In terms of tissue distribution, expressed in roots. Barely detected in flowers.

Its function is as follows. Produces a rapid alkalinization of the cellular media and the induction of defense-related genes, including chitinase 1b, chalcone synthase and CYP93A1. Not active in tobacco or Arabidopsis. The receptor for GmPep890 is probably different from the receptor for GmSubPep. The protein is Protein PROPEP890 (PROPEP890) of Glycine max (Soybean).